A 257-amino-acid polypeptide reads, in one-letter code: MQVIRLEALSDNYIFLLYDDKRNIAAVVDPAEAQPVLKKLAELKADLVAIFNTHHHNDHVGGNKQLIEKFPQLIVYGGAEDRGRIPGQKVFLQQGDRVEFADRIAEVIFVPGHTRAHIAYYFPPQEASETGDLFCGDTLFSGGCGRLFEGTPTQMVDSLSKLRSLPDNTRIWCAHEYTLKNLQFALTVDGDNADLQRRFNEVKAYRSRGEATIPSLLGVEKHTNPFLRWDQASLQSTVKSSDGVQTFARIREMKNNF.

Residues His-54, His-56, Asp-58, His-59, His-113, Asp-137, and His-175 each coordinate Zn(2+).

It belongs to the metallo-beta-lactamase superfamily. Glyoxalase II family. In terms of assembly, monomer. Zn(2+) is required as a cofactor.

It catalyses the reaction an S-(2-hydroxyacyl)glutathione + H2O = a 2-hydroxy carboxylate + glutathione + H(+). It functions in the pathway secondary metabolite metabolism; methylglyoxal degradation; (R)-lactate from methylglyoxal: step 2/2. Its function is as follows. Thiolesterase that catalyzes the hydrolysis of S-D-lactoyl-glutathione to form glutathione and D-lactic acid. This is Hydroxyacylglutathione hydrolase from Nostoc punctiforme (strain ATCC 29133 / PCC 73102).